Here is a 265-residue protein sequence, read N- to C-terminus: Thiamine thiazole synthase (265 aa).

Residues A43, 62-63, G70, V134, and 162-164 contribute to the NAD(+) site; these read ER and HVD. Residues D164 and H179 each contribute to the Fe cation site. M229 contacts NAD(+). R239 contributes to the glycine binding site.

It belongs to the THI4 family. As to quaternary structure, homooctamer; tetramer of dimers. Requires Fe(2+) as cofactor.

The enzyme catalyses hydrogen sulfide + glycine + NAD(+) = ADP-5-ethyl-4-methylthiazole-2-carboxylate + nicotinamide + 3 H2O + H(+). Its pathway is cofactor biosynthesis; thiamine diphosphate biosynthesis. In terms of biological role, involved in the biosynthesis of the thiazole moiety of thiamine. Catalyzes the conversion of NAD and glycine to adenosine diphosphate 5-(2-hydroxyethyl)-4-methylthiazole-2-carboxylate (ADT), an adenylated thiazole intermediate, using free sulfide as a source of sulfur. The protein is Thiamine thiazole synthase of Sulfolobus acidocaldarius (strain ATCC 33909 / DSM 639 / JCM 8929 / NBRC 15157 / NCIMB 11770).